The following is a 401-amino-acid chain: tRNA (guanine-N(7)-)-methyltransferase non-catalytic subunit wuho (401 aa).

The tract at residues 45–85 (KGRPRKYFDADSDSDEEQQNGDEPGTGKNNGGGDTGKKDQD) is disordered. Residues 54–64 (ADSDSDEEQQN) are compositionally biased toward acidic residues. WD repeat units lie at residues 86 to 125 (DQTN…RTLK), 174 to 213 (GHMS…NIET), and 217 to 255 (GHTE…ELAR).

This sequence belongs to the WD repeat TRM82 family. In terms of assembly, forms a heterodimer with the catalytic subunit.

The protein resides in the nucleus. Its pathway is tRNA modification; N(7)-methylguanine-tRNA biosynthesis. Required for the formation of N(7)-methylguanine at position 46 (m7G46) in tRNA. In the complex, it is required to stabilize and induce conformational changes of the catalytic subunit. In Culex quinquefasciatus (Southern house mosquito), this protein is tRNA (guanine-N(7)-)-methyltransferase non-catalytic subunit wuho.